The sequence spans 334 residues: Transcription initiation factor IIB (334 aa).

Residues 34–65 form a TFIIB-type zinc finger; sequence TETVCPECGGRQLVHDYERAELVCQSCGLVID. Cysteine 38, cysteine 41, cysteine 57, and cysteine 60 together coordinate Zn(2+). Repeat copies occupy residues 151–234 and 245–326.

Belongs to the TFIIB family.

Stabilizes TBP binding to an archaeal box-A promoter. Also responsible for recruiting RNA polymerase II to the pre-initiation complex (DNA-TBP-TFIIB). This chain is Transcription initiation factor IIB, found in Methanoregula boonei (strain DSM 21154 / JCM 14090 / 6A8).